The sequence spans 552 residues: Cytochrome P450 97B1, chloroplastic (552 aa).

The N-terminal 52 residues, 1–52 (MVAAPISTVKLTDANLHTRFHSSSSSTPSTLSLPLSLHFHFSSHSKRFSSIR), are a transit peptide targeting the chloroplast. A heme-binding site is contributed by Cys528.

The protein belongs to the cytochrome P450 family. The cofactor is heme.

The protein localises to the plastid. It localises to the chloroplast membrane. The chain is Cytochrome P450 97B1, chloroplastic (CYP97B1) from Pisum sativum (Garden pea).